Here is a 128-residue protein sequence, read N- to C-terminus: Cystatin-12 (128 aa).

The first 21 residues, Met-1–Phe-21, serve as a signal peptide directing secretion. 2 disulfide bridges follow: Cys-82–Cys-92 and Cys-105–Cys-125. N-linked (GlcNAc...) asparagine glycosylation is present at Asn-122.

Belongs to the cystatin family. In terms of tissue distribution, located at the very proximal caput epididymis (at protein level). Expressed in epididymis, Sertoli cells and testis. Also found to be weakly expressed in ovary and prostate.

It is found in the secreted. May play a specialized role in spermatogenesis. This chain is Cystatin-12 (Cst12), found in Mus musculus (Mouse).